Consider the following 253-residue polypeptide: 5-oxoprolinase subunit A (253 aa).

It belongs to the LamB/PxpA family. As to quaternary structure, forms a complex composed of PxpA, PxpB and PxpC.

It carries out the reaction 5-oxo-L-proline + ATP + 2 H2O = L-glutamate + ADP + phosphate + H(+). In terms of biological role, catalyzes the cleavage of 5-oxoproline to form L-glutamate coupled to the hydrolysis of ATP to ADP and inorganic phosphate. The polypeptide is 5-oxoprolinase subunit A (Bacillus cereus (strain AH820)).